The sequence spans 480 residues: Adenosylhomocysteinase (480 aa).

Positions 63, 142, and 203 each coordinate substrate. 204 to 206 (TTT) is a binding site for NAD(+). The substrate site is built by Lys233 and Asp237. NAD(+) is bound by residues Asn238, 267–272 (GYGDVG), Glu290, Asn325, 346–348 (IGH), and Asn394.

This sequence belongs to the adenosylhomocysteinase family. It depends on NAD(+) as a cofactor.

It localises to the cytoplasm. It catalyses the reaction S-adenosyl-L-homocysteine + H2O = L-homocysteine + adenosine. It functions in the pathway amino-acid biosynthesis; L-homocysteine biosynthesis; L-homocysteine from S-adenosyl-L-homocysteine: step 1/1. Its function is as follows. May play a key role in the regulation of the intracellular concentration of adenosylhomocysteine. The sequence is that of Adenosylhomocysteinase from Xanthomonas euvesicatoria pv. vesicatoria (strain 85-10) (Xanthomonas campestris pv. vesicatoria).